We begin with the raw amino-acid sequence, 491 residues long: Keratin, type I cytoskeletal 24 (491 aa).

Residues 1 to 23 (MFCSAQKGSCSSRVSSSGAVGSR) are disordered. The segment at 1–117 (MFCSAQKGSC…GYDGGLLSGS (117 aa)) is head. Low complexity predominate over residues 8-23 (GSCSSRVSSSGAVGSR). Positions 118 to 153 (EKQTMQGLNDRLANYLDKVRALEEANTDLETKIKDW) are coil 1A. The IF rod domain maps to 118–432 (EKQTMQGLND…RLLNGDGGGC (315 aa)). The linker 1 stretch occupies residues 154–174 (YGRHGSGKDGPGRDYSQYCSV). The interval 175–266 (IEDLKNQIIS…KNHEEEMKCL (92 aa)) is coil 1B. Residues 267–289 (QGSSGGDVTVEMNATPGTDLTKL) are linker 12. The segment at 290-428 (LNDMRAQYEA…ETYRRLLNGD (139 aa)) is coil 2. The tail stretch occupies residues 429 to 491 (GGGCDYRNLV…VSNISEVKIK (63 aa)).

It belongs to the intermediate filament family. In terms of assembly, heterotetramer of two type I and two type II keratins.

This chain is Keratin, type I cytoskeletal 24 (Krt24), found in Rattus norvegicus (Rat).